A 326-amino-acid polypeptide reads, in one-letter code: NAD kinase (326 aa).

Aspartate 93 serves as the catalytic Proton acceptor. Residues 93 to 94 (DG), arginine 98, 171 to 172 (NE), arginine 182, aspartate 201, and 212 to 217 (TAHAFS) contribute to the NAD(+) site.

The protein belongs to the NAD kinase family. A divalent metal cation is required as a cofactor.

The protein resides in the cytoplasm. The catalysed reaction is NAD(+) + ATP = ADP + NADP(+) + H(+). Involved in the regulation of the intracellular balance of NAD and NADP, and is a key enzyme in the biosynthesis of NADP. Catalyzes specifically the phosphorylation on 2'-hydroxyl of the adenosine moiety of NAD to yield NADP. The polypeptide is NAD kinase (Thermobifida fusca (strain YX)).